The following is a 471-amino-acid chain: uncharacterized protein (471 aa).

The next 12 membrane-spanning stretches (helical) occupy residues 48-68, 85-105, 123-140, 145-165, 186-206, 223-243, 277-297, 320-340, 349-369, 379-399, 414-434, and 440-460; these read FISA…FTIV, LSGV…YPML, YTMS…YALA, SVAL…MFLY, VVNS…GGLM, SGNW…FACF, FVGC…YFLL, GNFL…FSYL, IILL…TIHY, FIIY…SVSL, VAVQ…GGAF, and VVFF…LLII.

Belongs to the major facilitator superfamily.

It is found in the golgi apparatus. The protein localises to the membrane. This is an uncharacterized protein from Schizosaccharomyces pombe (strain 972 / ATCC 24843) (Fission yeast).